We begin with the raw amino-acid sequence, 546 residues long: Immunoglobulin heavy constant epsilon (546 aa).

At 1-499 (ASTQSPSVFP…EAPWTWTGLC (499 aa)) the chain is on the extracellular side. Ig-like domains follow at residues 6–103 (PSVF…KTFS), 112–210 (PTVK…KKCA), 214–318 (PRGV…TKTS), and 324–423 (PEVY…RAVS). 5 disulfides stabilise this stretch: cysteine 15–cysteine 105, cysteine 29–cysteine 85, cysteine 135–cysteine 193, cysteine 239–cysteine 299, and cysteine 345–cysteine 405. N-linked (GlcNAc...) asparagine glycosylation is found at asparagine 21, asparagine 49, asparagine 99, asparagine 146, asparagine 252, asparagine 264, and asparagine 275. The chain crosses the membrane as a helical span at residues 500 to 520 (IFAALFLLSVSYSAAITLLMV). At 521–546 (QRFLSATRQGRPQTSLDYTNVLQPHA) the chain is on the cytoplasmic side.

As to quaternary structure, the basic structural unit of both sIgE and mIgE molecules consists of two identical heavy chains and two identical light chains; disulfide-linked. N-terminal variable regions of the heavy and light chains form the antigen binding sites, whereas the C-terminal constant regions of the heavy chains interact with immune receptors to mediate effector functions. Part of IgE antibody. Interacts (via CH3) with the alpha chain/FCE1RA of IgE Fc receptor complex. Interacts (via CH3 region) with FCER2 (via C-type lectin domain); this interaction regulates IgE homeostasis. In terms of assembly, part of IgE B cell antigen receptor complex (BCR). The BCR complex consists of one mIgE molecule responsible for antigen binding, non-covalently associated with CD79A and CD79B signaling chains. Expressed in B lymphocytes stimulated with IL4 and CD40.

The protein resides in the secreted. Its subcellular location is the cell membrane. Constant region of immunoglobulin heavy chains. Immunoglobulins, also known as antibodies, are membrane-bound or secreted glycoproteins produced by B lymphocytes. In the recognition phase of humoral immunity, the membrane-bound immunoglobulins serve as receptors which, upon binding of a specific antigen, trigger the clonal expansion and differentiation of B lymphocytes into immunoglobulins-secreting plasma cells. Secreted immunoglobulins mediate the effector phase of humoral immunity, which results in the elimination of bound antigens. The antigen binding site is formed by the variable domain of one heavy chain, together with that of its associated light chain. Thus, each immunoglobulin has two antigen binding sites with remarkable affinity for a particular antigen. The variable domains are assembled by a process called V-(D)-J rearrangement and can then be subjected to somatic hypermutations which, after exposure to antigen and selection, allow affinity maturation for a particular antigen. In terms of biological role, constant region of secreted IgE, also known as the Fc region of IgE antibody. Mediates IgE effector functions on myeloid and lymphoid cells primarily via two Fc receptors, the high-affinity IgE Fc receptor complex/FCER1A:MS4A2:FCGR1A and the low-affinity FCER2 receptor, which upon antigen/allergen cross-linking initiate signaling pathways that lead to immune cell activation and differentiation. Triggers the immediate hypersensitivity response to allergens as a host defense mechanism against helminth parasites, pathogenic bacteria and venom toxicity. When dysregulated, it can elicit harmful life-threatening allergic and anaphylactic reactions. Stimulates the high-affinity IgE Fc receptor complex/FCER1A:MS4A2:FCGR1A on mast cells, basophils and eosinophils leading to secretion of vasoactive amines, lipid mediators and cytokines that contribute to inflammatory response, tissue remodeling and cytotoxicity against microbes. On macrophages, cross-linking of FCER2 by IgE immune complexes induces intracellular killing of parasites through activation of L-Arginine-nitric oxide pathway. Activates macrophages to kill tumor cells via antigen-specific antibody-dependent cytotoxicity (ADCC). Triggers differentiation of quiescent M0 macrophages toward M1 state and reprograms M2 macrophages toward a proinflammatory state with antitumor functions. Stimulates FCER2 on B cells and initiates IgE-dependent antigen uptake and presentation to T cells. Its function is as follows. Constant region of membrane-bound IgE (long mIgE), part of the B cell receptor complex (BCR). Upon antigen cross-linking triggers quick BCR signaling, ensuring survival of IgE-switched B cells and differentiation into plasma cells, thus regulating both primary and memory IgE responses. Functionally, constant region of membrane-bound IgE (short mIgE), part of the B cell receptor complex (BCR). Upon antigen cross-linking initiates slower but sustained BCR signaling that negatively regulates mature B cell proliferation. The polypeptide is Immunoglobulin heavy constant epsilon (Homo sapiens (Human)).